The sequence spans 240 residues: Arginine transport ATP-binding protein ArtM (240 aa).

The region spanning isoleucine 2–leucine 236 is the ABC transporter domain. Residue glycine 34 to serine 41 participates in ATP binding.

This sequence belongs to the ABC transporter superfamily.

The protein resides in the cell membrane. In terms of biological role, part of a binding-protein-dependent transport system for arginine. Probably responsible for energy coupling to the transport system. The protein is Arginine transport ATP-binding protein ArtM (artM) of Bacillus subtilis (strain 168).